The primary structure comprises 370 residues: 4-hydroxy-3-methylbut-2-en-1-yl diphosphate synthase (flavodoxin) (370 aa).

[4Fe-4S] cluster-binding residues include Cys270, Cys273, Cys305, and Glu312.

Belongs to the IspG family. [4Fe-4S] cluster is required as a cofactor.

The catalysed reaction is (2E)-4-hydroxy-3-methylbut-2-enyl diphosphate + oxidized [flavodoxin] + H2O + 2 H(+) = 2-C-methyl-D-erythritol 2,4-cyclic diphosphate + reduced [flavodoxin]. Its pathway is isoprenoid biosynthesis; isopentenyl diphosphate biosynthesis via DXP pathway; isopentenyl diphosphate from 1-deoxy-D-xylulose 5-phosphate: step 5/6. In terms of biological role, converts 2C-methyl-D-erythritol 2,4-cyclodiphosphate (ME-2,4cPP) into 1-hydroxy-2-methyl-2-(E)-butenyl 4-diphosphate. The chain is 4-hydroxy-3-methylbut-2-en-1-yl diphosphate synthase (flavodoxin) from Azotobacter vinelandii (strain DJ / ATCC BAA-1303).